We begin with the raw amino-acid sequence, 498 residues long: ATP synthase subunit beta, chloroplastic (498 aa).

172-179 (GGAGVGKT) lines the ATP pocket.

The protein belongs to the ATPase alpha/beta chains family. In terms of assembly, F-type ATPases have 2 components, CF(1) - the catalytic core - and CF(0) - the membrane proton channel. CF(1) has five subunits: alpha(3), beta(3), gamma(1), delta(1), epsilon(1). CF(0) has four main subunits: a(1), b(1), b'(1) and c(9-12).

It is found in the plastid. Its subcellular location is the chloroplast thylakoid membrane. It carries out the reaction ATP + H2O + 4 H(+)(in) = ADP + phosphate + 5 H(+)(out). In terms of biological role, produces ATP from ADP in the presence of a proton gradient across the membrane. The catalytic sites are hosted primarily by the beta subunits. This chain is ATP synthase subunit beta, chloroplastic, found in Montinia caryophyllacea (Wild clove bush).